Consider the following 1003-residue polypeptide: Pumilio homolog 4 (1003 aa).

The disordered stretch occupies residues 38 to 65 (QHRNQQSFGRERERDIDVHRSGSAPPTV). Basic and acidic residues predominate over residues 46–57 (GRERERDIDVHR). A Phosphoserine modification is found at Ser225. Residues 285–300 (KNSPNTMLGSTMSSPV) show a composition bias toward polar residues. Residues 285–328 (KNSPNTMLGSTMSSPVPRNRTPDSHLVGRSTASGLPPIGTRVGP) form a disordered region. Thr305 is modified (phosphothreonine). Residues 644-984 (AEASLLEGFK…HIVARVEKLI (341 aa)) enclose the PUM-HD domain. Pumilio repeat units lie at residues 664-699 (EIVG…AIFP), 700-735 (EILP…ELAE), 736-771 (QVTG…RMVK), 772-807 (ELDG…FIIS), 808-843 (SFYG…RIIM), 845-880 (EIMD…EIIN), 881-916 (KLAG…VLVN), and 917-958 (EMLG…LILS).

It localises to the cytoplasm. In terms of biological role, sequence-specific RNA-binding protein that regulates translation and mRNA stability by binding the 3'-UTR of target mRNAs. Binds the APUM-binding elements (APBEs) in the 3'-UTR mRNA sequence of CLV1, PNH, WUS and FAS2. The protein is Pumilio homolog 4 (APUM4) of Arabidopsis thaliana (Mouse-ear cress).